A 529-amino-acid polypeptide reads, in one-letter code: UDP-glucuronosyltransferase 2B9 (529 aa).

An N-terminal signal peptide occupies residues 1–21 (MSVKWTSVILLIQLSFYFSSG). N-linked (GlcNAc...) asparagine glycans are attached at residues Asn-67, Asn-68, and Asn-88. A helical transmembrane segment spans residues 494-514 (IGFLLACVATVIFVIMKCCLF).

The protein belongs to the UDP-glycosyltransferase family.

It is found in the microsome membrane. The protein localises to the endoplasmic reticulum membrane. The enzyme catalyses glucuronate acceptor + UDP-alpha-D-glucuronate = acceptor beta-D-glucuronoside + UDP + H(+). Its function is as follows. UDPGT is of major importance in the conjugation and subsequent elimination of potentially toxic xenobiotics and endogenous compounds. This isozyme is active on C18, C19, and C21 steroids, bile acids, and several xenobiotics including eugenol, 1-naphthol, and p-nitrophenol. This is UDP-glucuronosyltransferase 2B9 (UGT2B9) from Macaca fascicularis (Crab-eating macaque).